The following is a 364-amino-acid chain: Aminomethyltransferase (364 aa).

Belongs to the GcvT family. The glycine cleavage system is composed of four proteins: P, T, L and H.

It catalyses the reaction N(6)-[(R)-S(8)-aminomethyldihydrolipoyl]-L-lysyl-[protein] + (6S)-5,6,7,8-tetrahydrofolate = N(6)-[(R)-dihydrolipoyl]-L-lysyl-[protein] + (6R)-5,10-methylene-5,6,7,8-tetrahydrofolate + NH4(+). Its function is as follows. The glycine cleavage system catalyzes the degradation of glycine. The chain is Aminomethyltransferase from Photorhabdus laumondii subsp. laumondii (strain DSM 15139 / CIP 105565 / TT01) (Photorhabdus luminescens subsp. laumondii).